We begin with the raw amino-acid sequence, 90 residues long: U-scoloptoxin(15)-Sa3a (90 aa).

A signal peptide spans 1-18; sequence MKMVYLGLFLIITSCVIS.

Belongs to the scoloptoxin-15 family. In terms of processing, contains 3 disulfide bonds. Expressed by the venom gland.

Its subcellular location is the secreted. The sequence is that of U-scoloptoxin(15)-Sa3a from Scolopendra alternans (Florida Keys giant centipede).